The following is a 69-amino-acid chain: Conotoxin reg3f (69 aa).

An N-terminal signal peptide occupies residues 1 to 20; it reads MMSKLGVLLTICLLLFPLSA. Positions 21 to 52 are excised as a propeptide; the sequence is LPLDGDQPADQPAERMQDISPEQNPLFHPDKR. 3 cysteine pairs are disulfide-bonded: C54–C68, C55–C66, and C60–C69. The residue at position 69 (C69) is a Cysteine amide.

As to expression, expressed by the venom duct.

The protein resides in the secreted. In Conus regius (Crown cone), this protein is Conotoxin reg3f.